The chain runs to 101 residues: MKPNFSKGLLPAVVIEEGTKEVLMLAYMNEEAYEKTLKTKRTWFYSRSRRSLWNKGETSGHVQHVQSLYLDCDQDAIVVVVKQVGPACHTGEKTCFHYKII.

Aspartate 71 lines the Mg(2+) pocket. Cysteine 72 is a Zn(2+) binding site. 2 residues coordinate Mg(2+): aspartate 73 and aspartate 75. Residues cysteine 88 and cysteine 95 each coordinate Zn(2+).

The protein belongs to the PRA-CH family. Homodimer. Requires Mg(2+) as cofactor. Zn(2+) is required as a cofactor.

It is found in the cytoplasm. It carries out the reaction 1-(5-phospho-beta-D-ribosyl)-5'-AMP + H2O = 1-(5-phospho-beta-D-ribosyl)-5-[(5-phospho-beta-D-ribosylamino)methylideneamino]imidazole-4-carboxamide. The protein operates within amino-acid biosynthesis; L-histidine biosynthesis; L-histidine from 5-phospho-alpha-D-ribose 1-diphosphate: step 3/9. Catalyzes the hydrolysis of the adenine ring of phosphoribosyl-AMP. The polypeptide is Phosphoribosyl-AMP cyclohydrolase (Bacillus cereus (strain ZK / E33L)).